A 224-amino-acid chain; its full sequence is Large ribosomal subunit protein uL1 (224 aa).

The protein belongs to the universal ribosomal protein uL1 family. In terms of assembly, part of the 50S ribosomal subunit.

Its function is as follows. Binds directly to 23S rRNA. The L1 stalk is quite mobile in the ribosome, and is involved in E site tRNA release. In terms of biological role, protein L1 is also a translational repressor protein, it controls the translation of the L11 operon by binding to its mRNA. The sequence is that of Large ribosomal subunit protein uL1 from Borrelia recurrentis (strain A1).